The primary structure comprises 118 residues: MARIAGINIPDRKHAVIAITAIYGIGATRAKAICAATGIAESTKISELDEAKIDLLRAEVDKFTVEGDLRREVSMNIKRLMDLGCYRGIRHRRSLPLRGQRTKTNARTRKGPRKPIKK.

Positions 94-118 (SLPLRGQRTKTNARTRKGPRKPIKK) are disordered.

This sequence belongs to the universal ribosomal protein uS13 family. Part of the 30S ribosomal subunit. Forms a loose heterodimer with protein S19. Forms two bridges to the 50S subunit in the 70S ribosome.

In terms of biological role, located at the top of the head of the 30S subunit, it contacts several helices of the 16S rRNA. In the 70S ribosome it contacts the 23S rRNA (bridge B1a) and protein L5 of the 50S subunit (bridge B1b), connecting the 2 subunits; these bridges are implicated in subunit movement. Contacts the tRNAs in the A and P-sites. The chain is Small ribosomal subunit protein uS13 from Colwellia psychrerythraea (strain 34H / ATCC BAA-681) (Vibrio psychroerythus).